We begin with the raw amino-acid sequence, 356 residues long: MSDQPGTSRPPLRAEPTPTKTATRRRARPIAIPSDETPRNEVTFLRPSEVPQRKPLPEYREPQPRKTVPKNVPLEDLHNYHREECLNVSIPHFINTEDLIKESQRVNGLISFRSTNFVDPSVILKEIKKKEEETVTLMDNDKNSIIDIVGDGINYEKLKKVEKSLCQIDIITEFMNRSRHLQGKKVNGCIMRIDETKQLLFHVIIDGPVGSIYEGGTFFADINIQPYQNHSLIPRVCFHTFIFHPNLGKYGNWDMRGIQWERRSNLEVLYNFIVEGMRNVKYDIERRNLAQLEDMSQPNISRLAKEDWPKFERTAREFVMKMAGGTINGRKTIFAETKKRRRQDFLDEDIDVIGIS.

Residues 1–83 are disordered; the sequence is MSDQPGTSRP…LEDLHNYHRE (83 aa). Residues 18–32 are compositionally biased toward polar residues; the sequence is PTKTATRRRARPIAI. Basic and acidic residues predominate over residues 63 to 76; the sequence is QPRKTVPKNVPLED. A UBC core domain is found at 169-324; sequence DIITEFMNRS…AREFVMKMAG (156 aa).

It belongs to the ubiquitin-conjugating enzyme family. As to quaternary structure, may interact with pmk-3. In terms of tissue distribution, expressed ubiquitously.

It localises to the nucleus. The protein resides in the cytoplasm. It is found in the cell projection. The protein localises to the dendrite. Its subcellular location is the axon. It localises to the cilium. In terms of biological role, possible negative regulator of polyubiquitination. May modulate the activity of the p38 MAP kinase pnk-3. May have a role in axon termination and synaptic transmission at motor and mechanosensory neurons. Plays a role in intraflagellar transport in cilia and cilium length regulation. This chain is Ubiquitin-conjugating enzyme E2 variant 3, found in Caenorhabditis elegans.